We begin with the raw amino-acid sequence, 371 residues long: Chemerin-like receptor 1 (371 aa).

Over 1–39 the chain is Extracellular; that stretch reads MEYDAYNDSGIYDDEYSDGFGYFVDLEEASPWEAKVAPV. An N-linked (GlcNAc...) asparagine glycan is attached at Asn7. The chain crosses the membrane as a helical span at residues 40–62; that stretch reads FLVVIYSLVCFLGLLGNGLVIVI. Topologically, residues 63-73 are cytoplasmic; the sequence is ATFKMKKTVNT. Residues 74 to 95 traverse the membrane as a helical segment; sequence VWFVNLAVADFLFNIFLPMHIT. Residues 96-112 lie on the Extracellular side of the membrane; that stretch reads YAAMDYHWVFGKAMCKI. A disulfide bridge connects residues Cys110 and Cys187. Residues 113–133 form a helical membrane-spanning segment; it reads SNFLLSHNMYTSVFLLTVISF. Residues 134–152 lie on the Cytoplasmic side of the membrane; it reads DRCISVLLPVWSQNHRSIR. A helical membrane pass occupies residues 153–174; it reads LAYMTCSAVWVLAFFLSSPSLV. The Extracellular segment spans residues 175 to 222; the sequence is FRDTANIHGKITCFNNFSLAAPESSPHPAHSQVVSTGYSRHVAVTVTR. An N-linked (GlcNAc...) asparagine glycan is attached at Asn190. The chain crosses the membrane as a helical span at residues 223–243; the sequence is FLCGFLIPVFIITACYLTIVF. Over 244–259 the chain is Cytoplasmic; the sequence is KLQRNRLAKNKKPFKI. The helical transmembrane segment at 260–280 threads the bilayer; sequence IITIIITFFLCWCPYHTLYLL. Residues 281 to 298 lie on the Extracellular side of the membrane; the sequence is ELHHTAVPSSVFSLGLPL. Residues 299-318 form a helical membrane-spanning segment; it reads ATAVAIANSCMNPILYVFMG. The Cytoplasmic portion of the chain corresponds to 319–371; it reads HDFRKFKVALFSRLANALSEDTGPSSYPSHRSFTKMSSLNEKASVNEKETSTL. Ser337 is subject to Phosphoserine. Position 340 is a phosphothreonine (Thr340). Ser347, Ser350, and Ser356 each carry phosphoserine. Residue Thr370 is modified to Phosphothreonine.

The protein belongs to the chemokine-like receptor (CMKLR) family. As to expression, expressed in the differentiated adipocytes (at protein level). Ubiquitous. Highly expressed in adipose tissue and immature plasmacytoid dendritic cells (DCs) and at lower levels in myeloid DCs, macrophages, and NK cells. Expressed on macrophages isolated from different tissues, including peritoneal cavities, pleural cavities and spleen.

It is found in the cell membrane. In terms of biological role, receptor for the chemoattractant adipokine chemerin/RARRES2 and for the omega-3 fatty acid derived molecule resolvin E1. Interaction with RARRES2 initiates activation of G proteins G(i)/G(o) and beta-arrestin pathways inducing cellular responses via second messenger pathways such as intracellular calcium mobilization, phosphorylation of MAP kinases MAPK1/MAPK3 (ERK1/2), TYRO3, MAPK14/P38MAPK and PI3K leading to multifunctional effects, like, reduction of immune responses, enhancing of adipogenesis and angionesis. Resolvin E1 down-regulates cytokine production in macrophages by reducing the activation of MAPK1/3 (ERK1/2) and NF-kappa-B. Positively regulates adipogenesis and adipocyte metabolism. The protein is Chemerin-like receptor 1 (Cmklr1) of Mus musculus (Mouse).